A 109-amino-acid chain; its full sequence is CRISPR-associated endoribonuclease Cas2 (109 aa).

Residue aspartate 8 participates in Mg(2+) binding.

This sequence belongs to the CRISPR-associated endoribonuclease Cas2 protein family. Homodimer, forms a heterotetramer with a Cas1 homodimer. The cofactor is Mg(2+).

CRISPR (clustered regularly interspaced short palindromic repeat), is an adaptive immune system that provides protection against mobile genetic elements (viruses, transposable elements and conjugative plasmids). CRISPR clusters contain sequences complementary to antecedent mobile elements and target invading nucleic acids. CRISPR clusters are transcribed and processed into CRISPR RNA (crRNA). Functions as a ssRNA-specific endoribonuclease. Involved in the integration of spacer DNA into the CRISPR cassette. The protein is CRISPR-associated endoribonuclease Cas2 of Streptococcus mutans serotype c (strain ATCC 700610 / UA159).